The primary structure comprises 920 residues: Dynamin-2B (920 aa).

The residue at position 1 (M1) is an N-acetylmethionine. The 269-residue stretch at 35–303 folds into the Dynamin-type G domain; sequence PATSLNVVAL…IRSRMKLRLP (269 aa). Residues 45–52 are G1 motif; it reads GNVGAGKS. 45 to 53 is a binding site for GTP; sequence GNVGAGKSA. The interval 71 to 73 is G2 motif; it reads ATR. Residues 143 to 146 are G3 motif; it reads DLPG. The tract at residues 204-207 is G4 motif; sequence SKID. 204–210 contributes to the GTP binding site; the sequence is SKIDQAA. The G5 motif stretch occupies residues 238 to 241; it reads ALIG. 246–249 lines the GTP pocket; that stretch reads IASA. Residues 507 to 522 are compositionally biased toward basic and acidic residues; it reads RREEELKGRSSKKGQD. Disordered regions lie at residues 507–577 and 632–657; these read RREE…TAGP and IEEI…PDSK. A compositionally biased stretch (polar residues) spans 523–545; sequence AEQSLLNRATSPQPDGPSSTGGS. 2 stretches are compositionally biased toward basic and acidic residues: residues 548–567 and 641–652; these read SLRD…KETP and EKSKSSKDKKSN. The region spanning 579-703 is the PH domain; sequence GEITAGYLMK…WINKLQKVIQ (125 aa). One can recognise a GED domain in the interval 737 to 830; sequence LRWMSQEVRG…QLSIHDNRAA (94 aa). Positions 747–761 are important for homodimerization; that stretch reads YVEAVLNSLAANVPK. Residues 788-812 adopt a coiled-coil conformation; the sequence is NERIESLIQEDQNVKRRRDRYQKQS. Residues 828–920 are disordered; the sequence is RAAAASSWSD…PPQSGSSYRY (93 aa). Over residues 833–849 the composition is skewed to polar residues; sequence SSWSDNSGTESSPRTNG.

This sequence belongs to the TRAFAC class dynamin-like GTPase superfamily. Dynamin/Fzo/YdjA family. Interacts with DRP1A at the plasma membrane and in forming clathrin-coated vesicles (CCV). As to expression, ubiquitous. Preferentially expressed in siliques.

Its subcellular location is the cytoplasm. The protein resides in the cytoskeleton. It localises to the cytoplasmic vesicle. It is found in the clathrin-coated vesicle. The protein localises to the cell membrane. The enzyme catalyses GTP + H2O = GDP + phosphate + H(+). Functionally, putative microtubule-associated force-producing protein, able to bind and hydrolyze GTP. Collaboratively with DRP1A, participates in clathrin-coated vesicle formation during endocytosis. With DRP1A and PIP5K3, required for the precise coordination of polar ARAC3/ROP6 and ARAC4/ROP2 placement and subsequent root hair positioning during planar polarity formation in root hair-forming cells. This Arabidopsis thaliana (Mouse-ear cress) protein is Dynamin-2B.